A 363-amino-acid chain; its full sequence is NADH-quinone oxidoreductase subunit H (363 aa).

9 helical membrane-spanning segments follow: residues 62–82 (GPMY…KLLF), 94–114 (AIFV…WAVV), 127–147 (VGLL…ILAG), 166–186 (VVSY…AAGS), 202–222 (FFDW…VSGV), 239–257 (IVAG…LFFL), 264–286 (ILVS…QGWV), 293–313 (LIDW…LFFA), and 339–359 (FIPL…SGVI).

Belongs to the complex I subunit 1 family. As to quaternary structure, NDH-1 is composed of 14 different subunits. Subunits NuoA, H, J, K, L, M, N constitute the membrane sector of the complex.

It is found in the cell inner membrane. The enzyme catalyses a quinone + NADH + 5 H(+)(in) = a quinol + NAD(+) + 4 H(+)(out). Its function is as follows. NDH-1 shuttles electrons from NADH, via FMN and iron-sulfur (Fe-S) centers, to quinones in the respiratory chain. The immediate electron acceptor for the enzyme in this species is believed to be ubiquinone. Couples the redox reaction to proton translocation (for every two electrons transferred, four hydrogen ions are translocated across the cytoplasmic membrane), and thus conserves the redox energy in a proton gradient. This subunit may bind ubiquinone. This chain is NADH-quinone oxidoreductase subunit H, found in Xylella fastidiosa (strain 9a5c).